The sequence spans 177 residues: Alpha-crystallin A chain (177 aa).

Residue Met-1 is modified to N-acetylmethionine. In terms of domain architecture, sHSP spans 52–162 (VFRNFLDSGI…NWQDRPIPVS (111 aa)). Residues His-100 and Glu-102 each coordinate Zn(2+). A disulfide bond links Cys-131 and Cys-142. Residues 146-177 (TRPGDDSNWQDRPIPVSREEKQGTQPEIRADP) form a disordered region. Residue Ser-162 is glycosylated (O-linked (GlcNAc) serine). Over residues 162–177 (SREEKQGTQPEIRADP) the composition is skewed to basic and acidic residues.

The protein belongs to the small heat shock protein (HSP20) family. Heteropolymer composed of three CRYAA and one CRYAB subunits. Inter-subunit bridging via zinc ions enhances stability, which is crucial as there is no protein turn over in the lens. Can also form homodimers and homotetramers (dimers of dimers) which serve as the building blocks of homooligomers.

It is found in the cytoplasm. The protein resides in the nucleus. Functionally, contributes to the transparency and refractive index of the lens. May act as a chaperone, preventing aggregation of various proteins under a wide range of stress conditions. This chain is Alpha-crystallin A chain (cryaa), found in Squalus acanthias (Spiny dogfish).